The primary structure comprises 121 residues: Acidic phospholipase A2 SpII RP4 (121 aa).

7 cysteine pairs are disulfide-bonded: C25–C114, C27–C43, C42–C94, C48–C121, C49–C87, C56–C80, and C74–C85. Ca(2+) contacts are provided by Y26, G28, and G30. H46 is a catalytic residue. Residue D47 participates in Ca(2+) binding. Residue D88 is part of the active site.

Requires Ca(2+) as cofactor. Expressed by the venom gland.

It is found in the secreted. It catalyses the reaction a 1,2-diacyl-sn-glycero-3-phosphocholine + H2O = a 1-acyl-sn-glycero-3-phosphocholine + a fatty acid + H(+). Functionally, snake venom phospholipase A2 (PLA2) which exhibits indirect hemolysis, induces mild edema inflammation in the foot pads of mice and slightly delays anticoagulant activities. In mice, not lethal, even at the highest dose, and exhibits low to moderate myotoxicity on muscular fibers. PLA2 catalyzes the calcium-dependent hydrolysis of the 2-acyl groups in 3-sn-phosphoglycerides. The chain is Acidic phospholipase A2 SpII RP4 from Bothrops alternatus (Urutu).